The following is a 792-amino-acid chain: Probable phosphoketolase (792 aa).

Belongs to the XFP family. Thiamine diphosphate serves as cofactor.

The chain is Probable phosphoketolase from Brucella melitensis biotype 1 (strain ATCC 23456 / CCUG 17765 / NCTC 10094 / 16M).